We begin with the raw amino-acid sequence, 149 residues long: Ribonuclease H (149 aa).

The region spanning 5–146 (QRPHVVIFTD…ADELAREGLA (142 aa)) is the RNase H type-1 domain. Mg(2+)-binding residues include Asp14, Glu52, Asp74, and Asp138.

Belongs to the RNase H family. Monomer. Mg(2+) is required as a cofactor.

Its subcellular location is the cytoplasm. It catalyses the reaction Endonucleolytic cleavage to 5'-phosphomonoester.. Its function is as follows. Endonuclease that specifically degrades the RNA of RNA-DNA hybrids. In Afipia carboxidovorans (strain ATCC 49405 / DSM 1227 / KCTC 32145 / OM5) (Oligotropha carboxidovorans), this protein is Ribonuclease H.